Consider the following 107-residue polypeptide: Nucleoid-associated protein RF_1365 (107 aa).

The protein belongs to the YbaB/EbfC family. Homodimer.

The protein localises to the cytoplasm. The protein resides in the nucleoid. Binds to DNA and alters its conformation. May be involved in regulation of gene expression, nucleoid organization and DNA protection. This is Nucleoid-associated protein RF_1365 from Rickettsia felis (strain ATCC VR-1525 / URRWXCal2) (Rickettsia azadi).